Reading from the N-terminus, the 699-residue chain is 1,4-alpha-glucan-branching enzyme (699 aa).

Substrate is bound by residues 59-60 and 88-90; these read NE and WAP. Residue tryptophan 104 coordinates (1,4-alpha-D-glucosyl)n. 115–118 provides a ligand contact to substrate; the sequence is DYGK. Lysine 140 is a binding site for (1,4-alpha-D-glucosyl)n. A Phosphotyrosine modification is found at tyrosine 170. 330-333 contacts substrate; it reads EVLR. The Nucleophile role is filled by aspartate 354. Glutamate 409 (proton donor) is an active-site residue.

This sequence belongs to the glycosyl hydrolase 13 family. GlgB subfamily. Monomer.

The enzyme catalyses Transfers a segment of a (1-&gt;4)-alpha-D-glucan chain to a primary hydroxy group in a similar glucan chain.. The protein operates within glycan biosynthesis; glycogen biosynthesis. Its function is as follows. Glycogen-branching enzyme participates in the glycogen biosynthetic process along with glycogenin and glycogen synthase. Generates alpha-1,6-glucosidic branches from alpha-1,4-linked glucose chains, to increase solubility of the glycogen polymer. This chain is 1,4-alpha-glucan-branching enzyme (GBE1), found in Equus caballus (Horse).